The sequence spans 473 residues: Eukaryotic translation initiation factor 2 subunit gamma (473 aa).

The 211-residue stretch at Gln-40–Tyr-250 folds into the tr-type G domain. Positions Gly-49 to Ser-56 are G1. Ala-52 to Ser-57 contributes to the GTP binding site. Positions Asn-77–Lys-81 are G2. Residues Asp-135 to Gly-138 are G3. GTP contacts are provided by residues Asn-193–Asp-196 and Ser-228–Gln-230. Residues Asn-193 to Asp-196 form a G4 region. The segment at Ser-228 to Gln-230 is G5. Residues Gly-458 to Val-470 are interacts with CDC123.

The protein belongs to the TRAFAC class translation factor GTPase superfamily. Classic translation factor GTPase family. EIF2G subfamily. As to quaternary structure, eukaryotic translation initiation factor 2 eIF2 is a heterotrimeric complex composed of an alpha, a beta and a gamma subunit. The factors eIF-1, eIF-2, eIF-3, TIF5/eIF-5 and methionyl-tRNAi form a multifactor complex (MFC) that may bind to the 40S ribosome.

It is found in the cytoplasm. The protein localises to the cytosol. The enzyme catalyses GTP + H2O = GDP + phosphate + H(+). Its function is as follows. As a subunit of eukaryotic initiation factor 2 eIF2, involved in the early steps of protein synthesis. In the presence of GTP, eIF-2 forms a ternary complex with initiator tRNA Met-tRNAi and then recruits the 40S ribosomal complex and initiation factors eIF-1, eIF-1A and eIF-3 to form the 43S pre-initiation complex (43S PIC), a step that determines the rate of protein translation. The 43S PIC binds to mRNA and scans downstream to the initiation codon, where it forms a 48S initiation complex by codon-anticodon base pairing. This leads to the displacement of eIF-1 to allow GTPase-activating protein (GAP) eIF-5-mediated hydrolysis of eIF2-bound GTP. Hydrolysis of GTP and release of Pi, which makes GTP hydrolysis irreversible, causes the release of the eIF-2-GDP binary complex from the 40S subunit, an event that is essential for the subsequent joining of the 60S ribosomal subunit to form an elongation-competent 80S ribosome. In order for eIF-2 to recycle and catalyze another round of initiation, the GDP bound to eIF-2 must be exchanged with GTP by way of a reaction catalyzed by GDP-GTP exchange factor (GEF) eIF-2B. In Cryptococcus neoformans var. grubii serotype A (strain H99 / ATCC 208821 / CBS 10515 / FGSC 9487) (Filobasidiella neoformans var. grubii), this protein is Eukaryotic translation initiation factor 2 subunit gamma.